A 1061-amino-acid polypeptide reads, in one-letter code: Transcription factor GTE10 (1061 aa).

Disordered stretches follow at residues 32 to 56 (ERMN…NNGV) and 106 to 152 (NDHS…RLNV). A compositionally biased stretch (basic and acidic residues) spans 109–118 (SCSDGPRRPP). The Bromo domain occupies 156–262 (YTVASVMKEC…KYFESGWKSI (107 aa)). Residues 304 to 386 (KLRVEPAKLV…DYLREKKKSM (83 aa)) form the NET domain. 4 disordered regions span residues 443 to 518 (ACRN…LNEL), 538 to 558 (VPDE…PDKR), 606 to 645 (KERL…ARQA), and 710 to 1033 (HLGL…GNGK). Over residues 448–476 (ESSSSSSSSSESGSSSSDSDSCSSSGSET) the composition is skewed to low complexity. The segment covering 477–506 (DSIKASKPTSREEKKQPGVGIDKKEDDSNS) has biased composition (basic and acidic residues). Residues 588–658 (PEKLRIEREE…MEKTVEINEG (71 aa)) adopt a coiled-coil conformation. 5 stretches are compositionally biased toward basic and acidic residues: residues 733–755 (RKVE…RVEG), 770–792 (EAHD…ERQL), 828–852 (EEVH…EDPR), 860–883 (VSEK…REEQ), and 912–929 (LSLD…REEG). Residues 852–893 (RASGNEESVSEKAQDYENQRDEKINQSEREEQLENVLEQESS) adopt a coiled-coil conformation. Positions 940 to 949 (LVSQKTQDNG) are enriched in polar residues. 2 stretches are compositionally biased toward basic and acidic residues: residues 952-962 (EDEKSINKIEG) and 990-1002 (GEQK…KGVE).

In terms of assembly, interacts with TIP/NAC091. In terms of tissue distribution, widely expressed in all tissues.

The protein resides in the nucleus. Acts as a negative regulator in plant response to changes in environmental conditions through the control of ABA-regulated gene expression. The chain is Transcription factor GTE10 (GTE10) from Arabidopsis thaliana (Mouse-ear cress).